Here is a 466-residue protein sequence, read N- to C-terminus: Transcription factor SOX-10 (466 aa).

Disordered stretches follow at residues M1–K67, L160–G198, D213–N275, Q355–T375, and R433–P466. Low complexity predominate over residues L23 to G32. S24 carries the phosphoserine modification. The tract at residues E62–P102 is dimerization (DIM). Residues V104–K172 constitute a DNA-binding region (HMG box). Basic and acidic residues-rich tracts occupy residues L160–Y173 and A254–I271. Residues P228–V310 are transactivation domain (TAM). Positions K353–P466 are transactivation domain (TAC). Residues S440 to P466 show a composition bias toward polar residues.

As to quaternary structure, monomer. Interacts with Armcx3 at the mitochondrial outer membrane surface. Interacts with PAX3. As to expression, predominant expression in glial cells of the nervous system.

The protein resides in the cytoplasm. It is found in the nucleus. The protein localises to the mitochondrion outer membrane. Its function is as follows. Transcription factor that plays a central role in developing and mature glia. Specifically activates expression of myelin genes, during oligodendrocyte (OL) maturation, such as DUSP15 and MYRF, thereby playing a central role in oligodendrocyte maturation and CNS myelination. Once induced, MYRF cooperates with SOX10 to implement the myelination program. Transcriptional activator of MITF, acting synergistically with PAX3. Transcriptional activator of MBP, via binding to the gene promoter. In Rattus norvegicus (Rat), this protein is Transcription factor SOX-10 (Sox10).